A 440-amino-acid polypeptide reads, in one-letter code: FAD-dependent monooxygenase afoD (440 aa).

A helical transmembrane segment spans residues 10–30 (PLSIAIIGGGIIGLMTALGLL). Residues Glu-41, Leu-145, and Asp-320 each coordinate FAD. Asn-352 is a glycosylation site (N-linked (GlcNAc...) asparagine).

This sequence belongs to the paxM FAD-dependent monooxygenase family. FAD is required as a cofactor.

The protein localises to the membrane. FAD-dependent monooxygenase; part of the gene cluster that mediates the biosynthesis of asperfuranone, a probable antitumor agent. The polyketide synthase afoG is responsible for producing the 3,5-dimethyloctadienone moiety from acetyl-CoA, three malonyl-CoA, and two S-adenosyl methionines (SAM). The 3,5-dimethyloctadienone moiety is then loaded onto the SAT domain of afoE and extended with four malonyl-CoA and one SAM, which leads to the formation of 2,4-dihydroxy-6-(5,7-dimethyl-2-oxo-trans-3-trans-5-nonadienyl)-3-methylbenzaldehyde (compound 2) after reductive release and aldol condensation. AfoD is the next enzyme in the biosynthesis sequence and hydroxylates the side chain at the benzylic position of compound 2. After benzylic hydroxylation, a furan ring is formed after five-member ring hemiacetal formation and water elimination. AfoF and afoC are proposed to oxidize the R-diketone proton and to reduce the unconjugated carbonyl group, respectively, to generate asperfuranone. Since no intermediates could be isolated from afoF and afoC deletants, the sequence of these two enzymes is not fully understood. Moreover, since afoC deletant still produces a small amount of asperfuranone, other endogenous oxidoreductases might catalyze the same reaction with much less efficiency. The chain is FAD-dependent monooxygenase afoD from Emericella nidulans (strain FGSC A4 / ATCC 38163 / CBS 112.46 / NRRL 194 / M139) (Aspergillus nidulans).